Here is a 544-residue protein sequence, read N- to C-terminus: Putative lipase ATG15 (544 aa).

Topologically, residues 1–45 are cytoplasmic; it reads MVADFDSGWYEGAGDELGQGARNGVLRERLGGNEKAQVVRSRRKA. The chain crosses the membrane as a helical; Signal-anchor for type II membrane protein span at residues 46–66; that stretch reads VAWNVLMVLGLILYVLYSACF. Topologically, residues 67 to 544 are lumenal; sequence AQARQWWRTN…NWFGYCTEYA (478 aa). N-linked (GlcNAc...) asparagine glycans are attached at residues Asn200, Asn229, and Asn234. Catalysis depends on Ser362, which acts as the Charge relay system. The interval 508-530 is disordered; sequence PMPSSVASKPTPTPTSPGSPSST.

This sequence belongs to the AB hydrolase superfamily. Lipase family. Binds to both phosphatidylinositol (PI) and phosphatidylinositol 3,5-bisphosphate (PIP2).

It is found in the endosome. The protein localises to the multivesicular body membrane. Its subcellular location is the prevacuolar compartment membrane. It catalyses the reaction a triacylglycerol + H2O = a diacylglycerol + a fatty acid + H(+). In terms of biological role, lipase which is essential for lysis of subvacuolar cytoplasm to vacuole targeted bodies and intravacuolar autophagic bodies. Involved in the lysis of intravacuolar multivesicular body (MVB) vesicles. The intravacuolar membrane disintegration by ATG15 is critical to life span extension. The sequence is that of Putative lipase ATG15 (ATG15) from Eremothecium gossypii (strain ATCC 10895 / CBS 109.51 / FGSC 9923 / NRRL Y-1056) (Yeast).